We begin with the raw amino-acid sequence, 362 residues long: MSNASTVETSDVERIAVNCSKSGMHNYIFIAIPIIYSTIFVVGVFGNSMVVIVIYSYMKMKTVASIFLMNLALSDLCFVITLPLWAAYTAMHYHWPFGNFLCKVASTAITLNLYTTVFLLTCLSIDRYSAIVHPMKSRIWRTAMVARLTCVGIWLVAFLASMPSIIYRQIYLFHDTNQTVCAIVYDSGHIYFMVGMSLAKNIVGFLIPFLIILTSYTLIGKTLKEVYRAQRARNDDIFKMIVAVVLLFFFCWIPYQVFTFLDVLIQMDVIQNCKMYDIVDTGMPITICIAYFNSCLNPFLYGFFGKNFRKHFLQLIKYIPPKMRTHASVNTKSSLVSSSLSDTKRASKKIALQMTDNEEHCK.

At 1–26 the chain is on the extracellular side; it reads MSNASTVETSDVERIAVNCSKSGMHN. Residues N3 and N18 are each glycosylated (N-linked (GlcNAc...) asparagine). 2 cysteine pairs are disulfide-bonded: C19-C273 and C102-C181. The helical transmembrane segment at 27–56 threads the bilayer; the sequence is YIFIAIPIIYSTIFVVGVFGNSMVVIVIYS. Topologically, residues 57-62 are cytoplasmic; it reads YMKMKT. A helical membrane pass occupies residues 63 to 90; sequence VASIFLMNLALSDLCFVITLPLWAAYTA. At 91-99 the chain is on the extracellular side; sequence MHYHWPFGN. The chain crosses the membrane as a helical span at residues 100-126; that stretch reads FLCKVASTAITLNLYTTVFLLTCLSID. Over 127–142 the chain is Cytoplasmic; the sequence is RYSAIVHPMKSRIWRT. A helical transmembrane segment spans residues 143–166; sequence AMVARLTCVGIWLVAFLASMPSII. Over 167-191 the chain is Extracellular; that stretch reads YRQIYLFHDTNQTVCAIVYDSGHIY. An angiotensin II-binding site is contributed by R168. An N-linked (GlcNAc...) asparagine glycan is attached at N177. Angiotensin II-binding residues include Y185 and K200. A helical transmembrane segment spans residues 192 to 217; the sequence is FMVGMSLAKNIVGFLIPFLIILTSYT. Residues 218–238 lie on the Cytoplasmic side of the membrane; that stretch reads LIGKTLKEVYRAQRARNDDIF. A helical transmembrane segment spans residues 239-267; the sequence is KMIVAVVLLFFFCWIPYQVFTFLDVLIQM. Residues 268–277 are Extracellular-facing; it reads DVIQNCKMYD. Residues 278-303 form a helical membrane-spanning segment; sequence IVDTGMPITICIAYFNSCLNPFLYGF. At 304–362 the chain is on the cytoplasmic side; sequence FGKNFRKHFLQLIKYIPPKMRTHASVNTKSSLVSSSLSDTKRASKKIALQMTDNEEHCK. The S-palmitoyl cysteine moiety is linked to residue C361.

The protein belongs to the G-protein coupled receptor 1 family. Post-translationally, C-terminal Ser or Thr residues may be phosphorylated. Expressed in lung, liver, kidney, and spleen, with highest expression in the heart.

Its subcellular location is the cell membrane. Functionally, receptor for angiotensin II, a vasoconstricting peptide, which acts as a key regulator of blood pressure and sodium retention by the kidney. The activated receptor in turn couples to G-alpha proteins G(q) (GNAQ, GNA11, GNA14 or GNA15) and thus activates phospholipase C and increases the cytosolic Ca(2+) concentrations, which in turn triggers cellular responses such as stimulation of protein kinase C. The sequence is that of Type-1 angiotensin II receptor A (agtr1-a) from Xenopus laevis (African clawed frog).